Here is a 147-residue protein sequence, read N- to C-terminus: MIRRRKKVRKLRGSHTHGWGCKKKHRGGGSKGGRGMAGTGKRNKSKWTWTIKYAPDHLGKRGFSRPPEVQREVRTVTLKSIDENLDELLQKGIAYEEEGKIIVDTTQFADKVLGTGKITKPLVIKARAFSSKAEEKIKAAGGEAVLV.

The span at 1 to 28 shows a compositional bias: basic residues; sequence MIRRRKKVRKLRGSHTHGWGCKKKHRGG. The tract at residues 1–43 is disordered; that stretch reads MIRRRKKVRKLRGSHTHGWGCKKKHRGGGSKGGRGMAGTGKRN. Positions 29 to 38 are enriched in gly residues; sequence GSKGGRGMAG.

It belongs to the universal ribosomal protein uL15 family. Part of the 50S ribosomal subunit.

Its function is as follows. Binds to the 23S rRNA. This Pyrococcus abyssi (strain GE5 / Orsay) protein is Large ribosomal subunit protein uL15.